Here is a 379-residue protein sequence, read N- to C-terminus: UDP-N-acetylglucosamine--N-acetylmuramyl-(pentapeptide) pyrophosphoryl-undecaprenol N-acetylglucosamine transferase (379 aa).

UDP-N-acetyl-alpha-D-glucosamine is bound by residues 17 to 19 (TGG), Asn128, Arg169, Ser197, and Gln298.

This sequence belongs to the glycosyltransferase 28 family. MurG subfamily.

The protein localises to the cell inner membrane. The enzyme catalyses di-trans,octa-cis-undecaprenyl diphospho-N-acetyl-alpha-D-muramoyl-L-alanyl-D-glutamyl-meso-2,6-diaminopimeloyl-D-alanyl-D-alanine + UDP-N-acetyl-alpha-D-glucosamine = di-trans,octa-cis-undecaprenyl diphospho-[N-acetyl-alpha-D-glucosaminyl-(1-&gt;4)]-N-acetyl-alpha-D-muramoyl-L-alanyl-D-glutamyl-meso-2,6-diaminopimeloyl-D-alanyl-D-alanine + UDP + H(+). The protein operates within cell wall biogenesis; peptidoglycan biosynthesis. In terms of biological role, cell wall formation. Catalyzes the transfer of a GlcNAc subunit on undecaprenyl-pyrophosphoryl-MurNAc-pentapeptide (lipid intermediate I) to form undecaprenyl-pyrophosphoryl-MurNAc-(pentapeptide)GlcNAc (lipid intermediate II). This chain is UDP-N-acetylglucosamine--N-acetylmuramyl-(pentapeptide) pyrophosphoryl-undecaprenol N-acetylglucosamine transferase, found in Brucella suis biovar 1 (strain 1330).